Here is an 81-residue protein sequence, read N- to C-terminus: Short neurotoxin 1 (81 aa).

Positions 1-21 are cleaved as a signal peptide; that stretch reads MKTLLLTLVVVTIVFLDLGYT. Disulfide bonds link cysteine 24-cysteine 43, cysteine 38-cysteine 60, cysteine 62-cysteine 73, and cysteine 74-cysteine 79.

The protein belongs to the three-finger toxin family. Short-chain subfamily. Type I alpha-neurotoxin sub-subfamily. Expressed by the venom gland.

Its subcellular location is the secreted. In terms of biological role, binds to muscle nicotinic acetylcholine receptor (nAChR) and inhibit acetylcholine from binding to the receptor, thereby impairing neuromuscular transmission. In Notechis scutatus scutatus (Mainland tiger snake), this protein is Short neurotoxin 1.